Consider the following 367-residue polypeptide: Glutamate 5-kinase (367 aa).

Residue K10 coordinates ATP. Substrate-binding residues include S50, D137, and N149. ATP contacts are provided by residues 169-170 (TD) and 211-217 (TGGMGTK). The PUA domain occupies 275-353 (AGELTVDAGA…QQIDAILGYE (79 aa)).

This sequence belongs to the glutamate 5-kinase family.

The protein localises to the cytoplasm. The catalysed reaction is L-glutamate + ATP = L-glutamyl 5-phosphate + ADP. It functions in the pathway amino-acid biosynthesis; L-proline biosynthesis; L-glutamate 5-semialdehyde from L-glutamate: step 1/2. Catalyzes the transfer of a phosphate group to glutamate to form L-glutamate 5-phosphate. The chain is Glutamate 5-kinase from Klebsiella pneumoniae (strain 342).